Consider the following 264-residue polypeptide: Acyl-[acyl-carrier-protein]--UDP-N-acetylglucosamine O-acyltransferase (264 aa).

It belongs to the transferase hexapeptide repeat family. LpxA subfamily. In terms of assembly, homotrimer.

Its subcellular location is the cytoplasm. It carries out the reaction a (3R)-hydroxyacyl-[ACP] + UDP-N-acetyl-alpha-D-glucosamine = a UDP-3-O-[(3R)-3-hydroxyacyl]-N-acetyl-alpha-D-glucosamine + holo-[ACP]. It functions in the pathway glycolipid biosynthesis; lipid IV(A) biosynthesis; lipid IV(A) from (3R)-3-hydroxytetradecanoyl-[acyl-carrier-protein] and UDP-N-acetyl-alpha-D-glucosamine: step 1/6. Involved in the biosynthesis of lipid A, a phosphorylated glycolipid that anchors the lipopolysaccharide to the outer membrane of the cell. This is Acyl-[acyl-carrier-protein]--UDP-N-acetylglucosamine O-acyltransferase from Albidiferax ferrireducens (strain ATCC BAA-621 / DSM 15236 / T118) (Rhodoferax ferrireducens).